A 475-amino-acid chain; its full sequence is Tubulin epsilon chain (475 aa).

148 to 154 is a GTP binding site; sequence GGGTGSG.

The protein belongs to the tubulin family. As to quaternary structure, found in a complex with TEDC1, TEDC2, TUBE1 and TUBD1.

It is found in the cytoplasm. Its subcellular location is the cytoskeleton. It localises to the microtubule organizing center. The protein resides in the centrosome. The sequence is that of Tubulin epsilon chain (TUBE1) from Homo sapiens (Human).